A 235-amino-acid polypeptide reads, in one-letter code: Uridylate kinase (235 aa).

9–12 (KLSG) serves as a coordination point for ATP. Residues 17–22 (GNQGYG) are involved in allosteric activation by GTP. Gly-51 provides a ligand contact to UMP. ATP-binding residues include Gly-52 and Arg-56. UMP-binding positions include Asp-71 and 132–139 (CGNPFFTT). Positions 159, 165, and 168 each coordinate ATP.

The protein belongs to the UMP kinase family. As to quaternary structure, homohexamer.

The protein resides in the cytoplasm. The catalysed reaction is UMP + ATP = UDP + ADP. The protein operates within pyrimidine metabolism; CTP biosynthesis via de novo pathway; UDP from UMP (UMPK route): step 1/1. Its activity is regulated as follows. Allosterically activated by GTP. Inhibited by UTP. In terms of biological role, catalyzes the reversible phosphorylation of UMP to UDP. The chain is Uridylate kinase from Synechococcus sp. (strain CC9311).